Reading from the N-terminus, the 531-residue chain is Beta-hexosaminidase subunit beta (531 aa).

The signal sequence occupies residues 1–24 (MRHRGLGLAALLALLAAVAPRSSA). N50 carries N-linked (GlcNAc...) asparagine glycosylation. The cysteines at positions 65 and 111 are disulfide-linked. N116, N164, and N301 each carry an N-linked (GlcNAc...) asparagine glycan. 2 disulfides stabilise this stretch: C283-C334 and C508-C525. E329 functions as the Proton donor in the catalytic mechanism.

This sequence belongs to the glycosyl hydrolase 20 family. As to quaternary structure, there are 3 forms of beta-hexosaminidase: hexosaminidase A is a heterodimer composed of one subunit alpha and one subunit beta (chain A and B); hexosaminidase B is a homodimer of two beta subunits (two chains A and B); hexosaminidase S is a homodimer of two alpha subunits. The composition of the dimer (isozyme A versus isozyme S) has a significant effect on the substrate specificity of the alpha subunit active site.

Its subcellular location is the lysosome. The protein resides in the cytoplasmic vesicle. It localises to the secretory vesicle. The protein localises to the cortical granule. The catalysed reaction is Hydrolysis of terminal non-reducing N-acetyl-D-hexosamine residues in N-acetyl-beta-D-hexosaminides.. The enzyme catalyses N-acetyl-beta-D-galactosaminyl-(1-&gt;4)-beta-D-3-sulfogalactosyl-(1-&gt;4)-beta-D-glucosyl-(1&lt;-&gt;1')-ceramide + H2O = a beta-D-3-sulfogalactosyl-(1-&gt;4)-beta-D-glucosyl-(1&lt;-&gt;1')-ceramide + N-acetyl-beta-D-galactosamine. It carries out the reaction a ganglioside GM2 (d18:1(4E)) + H2O = a ganglioside GM3 (d18:1(4E)) + N-acetyl-beta-D-galactosamine. It catalyses the reaction a ganglioside GM2 + H2O = a ganglioside GM3 + N-acetyl-beta-D-galactosamine. The catalysed reaction is beta-D-GalNAc-(1-&gt;4)-alpha-L-IdoA-(1-&gt;3)-beta-D-GalNAc-4-sulfate-(1-&gt;4)-alpha-L-IdoA-(1-&gt;3)-D-GalNAc-4-sulfate + H2O = alpha-L-IdoA-(1-&gt;3)-beta-D-GalNAc-4-sulfate-(1-&gt;4)-alpha-L-IdoA-(1-&gt;3)-D-GalNAc-4-sulfate + N-acetyl-D-galactosamine. The enzyme catalyses N-acetyl-beta-D-6-sulfogalactosaminyl-(1-&gt;4)-alpha-L-iduronyl-(1-&gt;3)-N-acetyl-D-6-sulfogalactosamine + H2O = alpha-L-iduronyl-(1-&gt;3)-N-acetyl-D-6-sulfogalactosamine + N-acetyl-D-6-sulfogalactosamine. Addition of GM2A stimulates the hydrolysis of sulfated glycosphingolipid SM2 and the ganglioside GM2. Hydrolyzes the non-reducing end N-acetyl-D-hexosamine and/or sulfated N-acetyl-D-hexosamine of glycoconjugates, such as the oligosaccharide moieties from proteins and neutral glycolipids, or from certain mucopolysaccharides. The isozyme B does not hydrolyze each of these substrates, however hydrolyzes efficiently neutral oligosaccharide. Only the isozyme A is responsible for the degradation of GM2 gangliosides in the presence of GM2A. During fertilization is responsible, at least in part, for the zona block to polyspermy. Present in the cortical granules of non-activated oocytes, is exocytosed during the cortical reaction in response to oocyte activation and inactivates the sperm galactosyltransferase-binding site, accounting for the block in sperm binding to the zona pellucida. The sequence is that of Beta-hexosaminidase subunit beta from Felis catus (Cat).